Here is a 270-residue protein sequence, read N- to C-terminus: Surfeit locus protein 4 homolog (270 aa).

Helical transmembrane passes span 65-85 (FLAT…CGMV), 93-113 (IAVG…SILW), 115-135 (FQFL…LAEA), 178-198 (LSVW…LVVL), 206-226 (ALIL…WWTI), and 243-263 (TLSV…GVSM). A Di-lysine motif motif is present at residues 267 to 270 (KKKW).

This sequence belongs to the SURF4 family.

The protein resides in the endoplasmic reticulum membrane. Its function is as follows. Endoplasmic reticulum cargo receptor that mediates the export of lipoproteins by recruiting cargos into COPII vesicles to facilitate their secretion. The sequence is that of Surfeit locus protein 4 homolog from Drosophila melanogaster (Fruit fly).